Consider the following 35-residue polypeptide: Surfactant protein C (35 aa).

Residues C5 and C6 are each lipidated (S-palmitoyl cysteine).

The protein localises to the secreted. It localises to the extracellular space. Its subcellular location is the surface film. In terms of biological role, pulmonary surfactant associated proteins promote alveolar stability by lowering the surface tension at the air-liquid interface in the peripheral air spaces. The protein is Surfactant protein C (SFTPC) of Sus scrofa (Pig).